We begin with the raw amino-acid sequence, 670 residues long: tRNA 5-methylaminomethyl-2-thiouridine biosynthesis bifunctional protein MnmC (670 aa).

A tRNA (mnm(5)s(2)U34)-methyltransferase region spans residues 1 to 242; sequence MTFSVQHAEI…KRECLSGLKI (242 aa). The FAD-dependent cmnm(5)s(2)U34 oxidoreductase stretch occupies residues 269 to 670; that stretch reads IGGGIASLCA…KKWLKGSKVE (402 aa).

It in the N-terminal section; belongs to the methyltransferase superfamily. tRNA (mnm(5)s(2)U34)-methyltransferase family. In the C-terminal section; belongs to the DAO family. FAD is required as a cofactor.

The protein localises to the cytoplasm. It carries out the reaction 5-aminomethyl-2-thiouridine(34) in tRNA + S-adenosyl-L-methionine = 5-methylaminomethyl-2-thiouridine(34) in tRNA + S-adenosyl-L-homocysteine + H(+). In terms of biological role, catalyzes the last two steps in the biosynthesis of 5-methylaminomethyl-2-thiouridine (mnm(5)s(2)U) at the wobble position (U34) in tRNA. Catalyzes the FAD-dependent demodification of cmnm(5)s(2)U34 to nm(5)s(2)U34, followed by the transfer of a methyl group from S-adenosyl-L-methionine to nm(5)s(2)U34, to form mnm(5)s(2)U34. The protein is tRNA 5-methylaminomethyl-2-thiouridine biosynthesis bifunctional protein MnmC of Haemophilus influenzae (strain PittGG).